The primary structure comprises 123 residues: NADH-quinone oxidoreductase subunit A (123 aa).

The next 3 membrane-spanning stretches (helical) occupy residues Y11 to L31, L68 to I88, and I93 to I113.

Belongs to the complex I subunit 3 family. NDH-1 is composed of 14 different subunits. Subunits NuoA, H, J, K, L, M, N constitute the membrane sector of the complex.

It is found in the cell inner membrane. The catalysed reaction is a quinone + NADH + 5 H(+)(in) = a quinol + NAD(+) + 4 H(+)(out). Its function is as follows. NDH-1 shuttles electrons from NADH, via FMN and iron-sulfur (Fe-S) centers, to quinones in the respiratory chain. The immediate electron acceptor for the enzyme in this species is believed to be ubiquinone. Couples the redox reaction to proton translocation (for every two electrons transferred, four hydrogen ions are translocated across the cytoplasmic membrane), and thus conserves the redox energy in a proton gradient. This Rickettsia felis (strain ATCC VR-1525 / URRWXCal2) (Rickettsia azadi) protein is NADH-quinone oxidoreductase subunit A.